The primary structure comprises 41 residues: SPENCQGESQPCGCYCDAEGQGWPQDAEENGDIVCGEXTPC.

Belongs to the phospholipase A2 family. Group II subfamily. D49 sub-subfamily. Nigroviriditoxin is a heterodimer of an acidic subunit A and a basic subunit B. Expressed by the venom gland.

The protein localises to the secreted. Its function is as follows. Heterodimer A-B: Nigroviriditoxin possesses phospholipase A2 (PLA2) activity. It consists of a non-covalent association of a basic PLA2 subunit B with a non-enzymatic subunit A. Functionally, subunit A: The acidic subunit of nigroviriditoxin probably is a heterotrimer of three disulfide-linked chains generated by post-translational maturation of a PLA2-like precursor. It appears to have no PLA2 activity of its own, instead inhibiting the catalytic activity of subunit B. It is not toxic to mice by itself but increases toxicity of subunit B. This chain is Phospholipase A2 homolog nigroviriditoxin acidic subunit A, found in Bothriechis nigroviridis (Black-speckled palm pit viper).